The following is a 123-amino-acid chain: 13 kDa major membrane protein (123 aa).

The protein resides in the cell membrane. This Francisella tularensis subsp. holarctica (strain LVS) protein is 13 kDa major membrane protein.